A 205-amino-acid chain; its full sequence is RNA pyrophosphohydrolase (205 aa).

The region spanning 6–149 (GFRPNVGIVL…KRGVYARALR (144 aa)) is the Nudix hydrolase domain. Positions 38-59 (GGMNTDETPVEAMYRELREETG) match the Nudix box motif. Residues 178–205 (GSSAAGHDSPRKRPRKRNGARAMRINND) form a disordered region. Basic residues predominate over residues 187–196 (PRKRPRKRNG).

Belongs to the Nudix hydrolase family. RppH subfamily. A divalent metal cation serves as cofactor.

In terms of biological role, accelerates the degradation of transcripts by removing pyrophosphate from the 5'-end of triphosphorylated RNA, leading to a more labile monophosphorylated state that can stimulate subsequent ribonuclease cleavage. This chain is RNA pyrophosphohydrolase, found in Xanthomonas axonopodis pv. citri (strain 306).